Consider the following 105-residue polypeptide: MKFYIVLLALAAFAMAEADPNLEARAGCSQKGKYCNGGTFLCCPGQGSCKGNQIAKKKYSASEAPSTEGVQRLLLVTGYALECLGCLFSQTPGYSGSVLPLLNSH.

The N-terminal stretch at 1–18 is a signal peptide; that stretch reads MKFYIVLLALAAFAMAEA. 3 disulfides stabilise this stretch: Cys35/Cys86, Cys42/Cys83, and Cys43/Cys49.

It is found in the secreted. The protein resides in the cell wall. In terms of biological role, aerial growth, conidiation, and dispersal of filamentous fungi in the environment rely upon a capability of their secreting small amphipathic proteins called hydrophobins (HPBs) with low sequence identity. Class I can self-assemble into an outermost layer of rodlet bundles on aerial cell surfaces, conferring cellular hydrophobicity that supports fungal growth, development and dispersal; whereas Class II form highly ordered films at water-air interfaces through intermolecular interactions but contribute nothing to the rodlet structure. In P.expansum, hydrophobins contribute to germination, tolerance to cold stress and mycotoxins patulin and citrinin production. This chain is Unclassified hydrophobin D, found in Penicillium expansum (Blue mold rot fungus).